A 156-amino-acid polypeptide reads, in one-letter code: Small ribosomal subunit protein uS7 (156 aa).

This sequence belongs to the universal ribosomal protein uS7 family. In terms of assembly, part of the 30S ribosomal subunit. Contacts proteins S9 and S11.

Functionally, one of the primary rRNA binding proteins, it binds directly to 16S rRNA where it nucleates assembly of the head domain of the 30S subunit. Is located at the subunit interface close to the decoding center, probably blocks exit of the E-site tRNA. The chain is Small ribosomal subunit protein uS7 from Rhodobacter capsulatus (Rhodopseudomonas capsulata).